Here is a 311-residue protein sequence, read N- to C-terminus: DNA replication terminus site-binding protein (311 aa).

It belongs to the Tus family.

It localises to the cytoplasm. In terms of biological role, trans-acting protein required for termination of DNA replication. Binds to DNA replication terminator sequences (terA to terF) to prevent the passage of replication forks. The termination efficiency will be affected by the affinity of this protein for the terminator sequence. This Yersinia pseudotuberculosis serotype O:1b (strain IP 31758) protein is DNA replication terminus site-binding protein.